A 330-amino-acid polypeptide reads, in one-letter code: Aspartate--ammonia ligase (330 aa).

Belongs to the class-II aminoacyl-tRNA synthetase family. AsnA subfamily.

It is found in the cytoplasm. It carries out the reaction L-aspartate + NH4(+) + ATP = L-asparagine + AMP + diphosphate + H(+). The protein operates within amino-acid biosynthesis; L-asparagine biosynthesis; L-asparagine from L-aspartate (ammonia route): step 1/1. This Shigella flexneri serotype 5b (strain 8401) protein is Aspartate--ammonia ligase.